The primary structure comprises 239 residues: Myogenic factor 6 (239 aa).

The segment at 27 to 64 (QHLDMPGVSPLYDGNHSPLSPGPDNVPSETGGESSGDE) is disordered. The bHLH domain maps to 96–147 (DRRKAATLRERRRLKKINEAFDALKRKSVANPNQRLPKVEILRSAISYIERL). Positions 155–184 (DEQERGQSGASDTRNDKEQNRPSGGDYCWK) are disordered.

As to quaternary structure, efficient DNA binding requires dimerization with another bHLH protein.

It localises to the nucleus. Functionally, involved in muscle differentiation (myogenic factor). Induces fibroblasts to differentiate into myoblasts. Probable sequence specific DNA-binding protein. The polypeptide is Myogenic factor 6 (myf6) (Tetraodon nigroviridis (Spotted green pufferfish)).